Here is a 744-residue protein sequence, read N- to C-terminus: Catalase A (744 aa).

Residues His93 and Asn166 contribute to the active site. Residue Tyr380 coordinates heme.

This sequence belongs to the catalase family. Heme serves as cofactor.

It localises to the peroxisome matrix. The catalysed reaction is 2 H2O2 = O2 + 2 H2O. Catalyzes the degradation of hydrogen peroxide (H(2)O(2)) generated by peroxisomal oxidases to water and oxygen, thereby protecting cells from the toxic effects of hydrogen peroxide. The polypeptide is Catalase A (catA) (Emericella nidulans (strain FGSC A4 / ATCC 38163 / CBS 112.46 / NRRL 194 / M139) (Aspergillus nidulans)).